Reading from the N-terminus, the 187-residue chain is MATPEFDLNDIKRRMQGAVASLSKDLGSLRTGRATPSLLDPIQVDAYGSMMPMAQVATVSVPEPRLLSISVWDRSMVTAVEKAIRESDLGLNPQTEGQTIRLRIPEMNEQRRKEMVKVAHKYTEEARVAVRHVRRDGLDHLKKLLKDSAISEDDEKRQATDVQKATDQYIAEIDGVLASKEKEIMQV.

The protein belongs to the RRF family.

Its subcellular location is the cytoplasm. Its function is as follows. Responsible for the release of ribosomes from messenger RNA at the termination of protein biosynthesis. May increase the efficiency of translation by recycling ribosomes from one round of translation to another. This chain is Ribosome-recycling factor, found in Methylobacterium radiotolerans (strain ATCC 27329 / DSM 1819 / JCM 2831 / NBRC 15690 / NCIMB 10815 / 0-1).